The following is a 277-amino-acid chain: Shikimate dehydrogenase (NADP(+)) (277 aa).

Residues 14 to 16 (SKS) and Thr61 each bind shikimate. The Proton acceptor role is filled by Lys65. NADP(+) is bound at residue Asp77. The shikimate site is built by Asn86 and Asp102. NADP(+)-binding positions include 127-131 (GAGGA), 151-156 (NRTPDK), and Met215. Shikimate is bound at residue Tyr217. Residue Gly239 participates in NADP(+) binding.

This sequence belongs to the shikimate dehydrogenase family. In terms of assembly, homodimer.

The catalysed reaction is shikimate + NADP(+) = 3-dehydroshikimate + NADPH + H(+). The protein operates within metabolic intermediate biosynthesis; chorismate biosynthesis; chorismate from D-erythrose 4-phosphate and phosphoenolpyruvate: step 4/7. In terms of biological role, involved in the biosynthesis of the chorismate, which leads to the biosynthesis of aromatic amino acids. Catalyzes the reversible NADPH linked reduction of 3-dehydroshikimate (DHSA) to yield shikimate (SA). In Nitrosomonas eutropha (strain DSM 101675 / C91 / Nm57), this protein is Shikimate dehydrogenase (NADP(+)).